Reading from the N-terminus, the 344-residue chain is Ferredoxin--NADP reductase (344 aa).

FAD contacts are provided by S12, D31, K39, Y43, V83, I118, D285, and S326.

The protein belongs to the ferredoxin--NADP reductase type 2 family. In terms of assembly, homodimer. FAD is required as a cofactor.

The catalysed reaction is 2 reduced [2Fe-2S]-[ferredoxin] + NADP(+) + H(+) = 2 oxidized [2Fe-2S]-[ferredoxin] + NADPH. The sequence is that of Ferredoxin--NADP reductase from Staphylococcus aureus (strain JH1).